The chain runs to 148 residues: NADH-quinone oxidoreductase subunit A (148 aa).

3 consecutive transmembrane segments (helical) span residues 14–34 (WAFA…LVGG), 68–88 (FYLV…LYAW), and 98–118 (VGFV…VYLV).

It belongs to the complex I subunit 3 family. In terms of assembly, NDH-1 is composed of 13 different subunits. Subunits NuoA, H, J, K, L, M, N constitute the membrane sector of the complex.

The protein resides in the cell inner membrane. It carries out the reaction a quinone + NADH + 5 H(+)(in) = a quinol + NAD(+) + 4 H(+)(out). In terms of biological role, NDH-1 shuttles electrons from NADH, via FMN and iron-sulfur (Fe-S) centers, to quinones in the respiratory chain. The immediate electron acceptor for the enzyme in this species is believed to be ubiquinone. Couples the redox reaction to proton translocation (for every two electrons transferred, four hydrogen ions are translocated across the cytoplasmic membrane), and thus conserves the redox energy in a proton gradient. The chain is NADH-quinone oxidoreductase subunit A from Klebsiella pneumoniae subsp. pneumoniae (strain ATCC 700721 / MGH 78578).